A 124-amino-acid chain; its full sequence is Fluoride-specific ion channel FluC 1 (124 aa).

The next 4 membrane-spanning stretches (helical) occupy residues 4–24, 36–56, 67–87, and 103–123; these read VLIG…GAWI, GTFA…GLVV, VVLG…LLDL, and AALS…LGWG. 2 residues coordinate Na(+): Gly-75 and Thr-78.

The protein belongs to the fluoride channel Fluc/FEX (TC 1.A.43) family.

The protein localises to the cell membrane. The catalysed reaction is fluoride(in) = fluoride(out). Na(+) is not transported, but it plays an essential structural role and its presence is essential for fluoride channel function. In terms of biological role, fluoride-specific ion channel. Important for reducing fluoride concentration in the cell, thus reducing its toxicity. This chain is Fluoride-specific ion channel FluC 1, found in Symbiobacterium thermophilum (strain DSM 24528 / JCM 14929 / IAM 14863 / T).